A 471-amino-acid polypeptide reads, in one-letter code: Glutamate--tRNA ligase (471 aa).

Residues 9-19 (PSPTGYLHVGG) carry the 'HIGH' region motif. Zn(2+) contacts are provided by Cys98, Cys100, Cys125, and His127. The short motif at 237 to 241 (KLSKR) is the 'KMSKS' region element. Lys240 lines the ATP pocket.

Belongs to the class-I aminoacyl-tRNA synthetase family. Glutamate--tRNA ligase type 1 subfamily. As to quaternary structure, monomer. Zn(2+) serves as cofactor.

It is found in the cytoplasm. It catalyses the reaction tRNA(Glu) + L-glutamate + ATP = L-glutamyl-tRNA(Glu) + AMP + diphosphate. Catalyzes the attachment of glutamate to tRNA(Glu) in a two-step reaction: glutamate is first activated by ATP to form Glu-AMP and then transferred to the acceptor end of tRNA(Glu). The sequence is that of Glutamate--tRNA ligase from Citrobacter koseri (strain ATCC BAA-895 / CDC 4225-83 / SGSC4696).